The primary structure comprises 486 residues: uncharacterized protein (486 aa).

LRR repeat units follow at residues 18–39 (NLKK…KKLV), 43–59 (ELHI…NIPE), 60–81 (NIKS…TKLK), 82–103 (NITY…ILPH), 104–125 (SIEF…NNLV), 126–147 (NLKK…FPIS), 148–168 (IVEL…EKLI), 169–190 (NLKK…IKFP), and 198–219 (DYQS…IEYE).

This is an uncharacterized protein from Amsacta moorei entomopoxvirus (AmEPV).